A 918-amino-acid polypeptide reads, in one-letter code: Valine--tRNA ligase (918 aa).

The 'HIGH' region motif lies at 50 to 60 (PNVTGSLHMGH). The short motif at 548-552 (KMSKS) is the 'KMSKS' region element. K551 contributes to the ATP binding site. Residues 849–883 (NDFVNLEALKDRLTKDLKKVNSDIETLNKRISNKN) are a coiled coil.

Belongs to the class-I aminoacyl-tRNA synthetase family. ValS type 1 subfamily. Monomer.

It is found in the cytoplasm. It catalyses the reaction tRNA(Val) + L-valine + ATP = L-valyl-tRNA(Val) + AMP + diphosphate. Functionally, catalyzes the attachment of valine to tRNA(Val). As ValRS can inadvertently accommodate and process structurally similar amino acids such as threonine, to avoid such errors, it has a 'posttransfer' editing activity that hydrolyzes mischarged Thr-tRNA(Val) in a tRNA-dependent manner. In Prochlorococcus marinus subsp. pastoris (strain CCMP1986 / NIES-2087 / MED4), this protein is Valine--tRNA ligase.